Here is a 525-residue protein sequence, read N- to C-terminus: Cytochrome P450 monooxygenase bsc2 (525 aa).

The chain crosses the membrane as a helical span at residues 12–32; it reads SLFILWLTTLLVSVLATAAYI. N86 and N317 each carry an N-linked (GlcNAc...) asparagine glycan. C456 is a heme binding site.

Belongs to the cytochrome P450 family. Heme is required as a cofactor.

The protein resides in the membrane. It participates in mycotoxin biosynthesis. Cytochrome P450 monooxygenase; part of the gene cluster that mediates the biosynthesis of the diterpene glucoside brassicicene C. In the first step of the brassicicene C biosynthesis, the bifunctional diterpene synthase bsc8 that possesses both prenyl transferase and terpene cyclase activity, converts isopentenyl diphosphate and dimethylallyl diphosphate into geranylgeranyl diphosphate (GGDP) that is further converted into fusicocca-2,10(14)-diene, the first precursor for brassicicene C. Fusicocca-2,10(14)-diene is then substrate of cytochrome P450 monooxygenase bsc1 for hydroxylation at the C-8 position. Oxidation at C-16 position to aldehyde is then catalyzed by the cytochrome P450 monooyxygenase bsc7, yielding fusicocca-2,10(14)-diene-8-beta,16-diol. Follows the isomerization of the double bond and reduction of aldehyde to alcohol catalyzed by the short-chain dehydrogenase/reductase bsc3 to yield the diol compound fusicocca-1,10(14)-diene-8 beta,16-diol. The next step is the oxidation at the C-3 position of fusicocca-2,10(14)-diene-8-beta,16-diol catalyzed by the alpha-ketoglutarate dependent dioxygenase bsc9, to produce a triol compound. Methylation of the hydroxy group at position 16 is performed by the methyltransferase bsc6. 16-O-methylation is followed by oxidation at the C-13 position to ketone and an alkyl shift of the methyl group leads to brassicicene C. Although the probable acetyltransferase bsc4 is included in the gene cluster, no acetylation reactions are necessary for brassicicene C biosynthesis. However, the fact that brassicicene E, which is a structurally related compound having an acetoxy group at position 12, was previously isolated from another strain of A.brassicicola suggests that the ATCC 96836 strain might also produce a small amount of brassicicene E. The polypeptide is Cytochrome P450 monooxygenase bsc2 (Alternaria brassicicola (Dark leaf spot agent)).